A 314-amino-acid chain; its full sequence is tRNA dimethylallyltransferase (314 aa).

Positions Met1–Leu24 are disordered. Gly40 to Ser47 serves as a coordination point for ATP. Residue Thr42 to Ser47 coordinates substrate.

This sequence belongs to the IPP transferase family. In terms of assembly, monomer. The cofactor is Mg(2+).

The enzyme catalyses adenosine(37) in tRNA + dimethylallyl diphosphate = N(6)-dimethylallyladenosine(37) in tRNA + diphosphate. Catalyzes the transfer of a dimethylallyl group onto the adenine at position 37 in tRNAs that read codons beginning with uridine, leading to the formation of N6-(dimethylallyl)adenosine (i(6)A). This is tRNA dimethylallyltransferase from Cereibacter sphaeroides (strain ATCC 17029 / ATH 2.4.9) (Rhodobacter sphaeroides).